A 281-amino-acid polypeptide reads, in one-letter code: Bifunctional protein FolD (281 aa).

NADP(+) contacts are provided by residues 165–167 (GRG), T192, and V233.

Belongs to the tetrahydrofolate dehydrogenase/cyclohydrolase family. As to quaternary structure, homodimer.

The catalysed reaction is (6R)-5,10-methylene-5,6,7,8-tetrahydrofolate + NADP(+) = (6R)-5,10-methenyltetrahydrofolate + NADPH. It carries out the reaction (6R)-5,10-methenyltetrahydrofolate + H2O = (6R)-10-formyltetrahydrofolate + H(+). The protein operates within one-carbon metabolism; tetrahydrofolate interconversion. Its function is as follows. Catalyzes the oxidation of 5,10-methylenetetrahydrofolate to 5,10-methenyltetrahydrofolate and then the hydrolysis of 5,10-methenyltetrahydrofolate to 10-formyltetrahydrofolate. The chain is Bifunctional protein FolD from Mycobacterium bovis (strain BCG / Tokyo 172 / ATCC 35737 / TMC 1019).